The sequence spans 769 residues: Probable beta-glucosidase M (769 aa).

The signal sequence occupies residues 1–22 (MHSNLGLAGLAGLLATASVCLS). Residues Asn28, Asn75, and Asn262 are each glycosylated (N-linked (GlcNAc...) asparagine). Asp290 is an active-site residue. Asn318, Asn325, Asn437, and Asn546 each carry an N-linked (GlcNAc...) asparagine glycan.

It belongs to the glycosyl hydrolase 3 family.

It localises to the secreted. The enzyme catalyses Hydrolysis of terminal, non-reducing beta-D-glucosyl residues with release of beta-D-glucose.. The protein operates within glycan metabolism; cellulose degradation. In terms of biological role, beta-glucosidases are one of a number of cellulolytic enzymes involved in the degradation of cellulosic biomass. Catalyzes the last step releasing glucose from the inhibitory cellobiose. This is Probable beta-glucosidase M (bglM) from Neosartorya fischeri (strain ATCC 1020 / DSM 3700 / CBS 544.65 / FGSC A1164 / JCM 1740 / NRRL 181 / WB 181) (Aspergillus fischerianus).